Consider the following 366-residue polypeptide: Chorismate synthase (366 aa).

Residues arginine 47 and arginine 53 each coordinate NADP(+). Residues 124–126 (RSS), glycine 286, 301–305 (KPTAT), and arginine 327 contribute to the FMN site.

The protein belongs to the chorismate synthase family. As to quaternary structure, homotetramer. FMNH2 is required as a cofactor.

It carries out the reaction 5-O-(1-carboxyvinyl)-3-phosphoshikimate = chorismate + phosphate. It functions in the pathway metabolic intermediate biosynthesis; chorismate biosynthesis; chorismate from D-erythrose 4-phosphate and phosphoenolpyruvate: step 7/7. Its function is as follows. Catalyzes the anti-1,4-elimination of the C-3 phosphate and the C-6 proR hydrogen from 5-enolpyruvylshikimate-3-phosphate (EPSP) to yield chorismate, which is the branch point compound that serves as the starting substrate for the three terminal pathways of aromatic amino acid biosynthesis. This reaction introduces a second double bond into the aromatic ring system. The protein is Chorismate synthase of Microcystis aeruginosa (strain NIES-843 / IAM M-2473).